The following is a 479-amino-acid chain: Aspartyl/glutamyl-tRNA(Asn/Gln) amidotransferase subunit B (479 aa).

This sequence belongs to the GatB/GatE family. GatB subfamily. Heterotrimer of A, B and C subunits.

The enzyme catalyses L-glutamyl-tRNA(Gln) + L-glutamine + ATP + H2O = L-glutaminyl-tRNA(Gln) + L-glutamate + ADP + phosphate + H(+). The catalysed reaction is L-aspartyl-tRNA(Asn) + L-glutamine + ATP + H2O = L-asparaginyl-tRNA(Asn) + L-glutamate + ADP + phosphate + 2 H(+). Its function is as follows. Allows the formation of correctly charged Asn-tRNA(Asn) or Gln-tRNA(Gln) through the transamidation of misacylated Asp-tRNA(Asn) or Glu-tRNA(Gln) in organisms which lack either or both of asparaginyl-tRNA or glutaminyl-tRNA synthetases. The reaction takes place in the presence of glutamine and ATP through an activated phospho-Asp-tRNA(Asn) or phospho-Glu-tRNA(Gln). In Streptococcus mutans serotype c (strain ATCC 700610 / UA159), this protein is Aspartyl/glutamyl-tRNA(Asn/Gln) amidotransferase subunit B.